We begin with the raw amino-acid sequence, 513 residues long: ATP synthase subunit alpha (513 aa).

169-176 (GDRQTGKT) is a binding site for ATP.

Belongs to the ATPase alpha/beta chains family. In terms of assembly, F-type ATPases have 2 components, CF(1) - the catalytic core - and CF(0) - the membrane proton channel. CF(1) has five subunits: alpha(3), beta(3), gamma(1), delta(1), epsilon(1). CF(0) has three main subunits: a(1), b(2) and c(9-12). The alpha and beta chains form an alternating ring which encloses part of the gamma chain. CF(1) is attached to CF(0) by a central stalk formed by the gamma and epsilon chains, while a peripheral stalk is formed by the delta and b chains.

Its subcellular location is the cell inner membrane. It carries out the reaction ATP + H2O + 4 H(+)(in) = ADP + phosphate + 5 H(+)(out). Its function is as follows. Produces ATP from ADP in the presence of a proton gradient across the membrane. The alpha chain is a regulatory subunit. The sequence is that of ATP synthase subunit alpha from Polynucleobacter necessarius subsp. necessarius (strain STIR1).